We begin with the raw amino-acid sequence, 208 residues long: Proheparin-binding EGF-like growth factor (208 aa).

An N-terminal signal peptide occupies residues 1–19; it reads MKLLPSVVLKLFLAAVLSA. Positions 20–62 are cleaved as a propeptide — or 72, or 73, or 76, or 81; the sequence is LVTGESLERLRRGLAAGTSNPDPPTVSTDQLLPLGGGRDRKVR. Topologically, residues 20–160 are extracellular; that stretch reads LVTGESLERL…ENRLYTYDHT (141 aa). Residues 33–56 form a disordered region; that stretch reads LAAGTSNPDPPTVSTDQLLPLGGG. A compositionally biased stretch (polar residues) spans 36-49; sequence GTSNPDPPTVSTDQ. T37 carries an O-linked (GalNAc...) threonine glycan. Residue S38 is glycosylated (O-linked (GalNAc...) serine). T44, T47, T75, and T85 each carry an O-linked (GalNAc...) threonine glycan. The tract at residues 82–104 is disordered; the sequence is ALATPNKEEHGKRKKKGKGLGKK. Residues 93-102 are compositionally biased toward basic residues; sequence KRKKKGKGLG. An EGF-like domain is found at 104-144; sequence KRDPCLRKYKDFCIHGECKYVKELRAPSCICHPGYHGERCH. Intrachain disulfides connect C108-C121, C116-C132, and C134-C143. Residues 149-208 constitute a propeptide, C-terminal; that stretch reads PVENRLYTYDHTTILAVVAVVLSSVCLLVIVGLLMFRYHRRGGYDVENEEKVKLGMTNSH. The chain crosses the membrane as a helical span at residues 161-184; the sequence is TILAVVAVVLSSVCLLVIVGLLMF. The Cytoplasmic portion of the chain corresponds to 185-208; that stretch reads RYHRRGGYDVENEEKVKLGMTNSH.

In terms of assembly, interacts with FBLN1. Interacts with EGFR and ERBB4. Post-translationally, several N-termini have been identified by direct sequencing. The forms with N-termini 63, 73 and 74 have been tested and found to be biologically active. O-glycosylated with core 1 or possibly core 8 glycans. Thr-47 is a minor glycosylation site compared to Thr-44.

The protein resides in the secreted. The protein localises to the extracellular space. It is found in the cell membrane. Functionally, growth factor that mediates its effects via EGFR, ERBB2 and ERBB4. Required for normal cardiac valve formation and normal heart function. Promotes smooth muscle cell proliferation. May be involved in macrophage-mediated cellular proliferation. It is mitogenic for fibroblasts, but not endothelial cells. It is able to bind EGF receptor/EGFR with higher affinity than EGF itself and is a far more potent mitogen for smooth muscle cells than EGF. Also acts as a diphtheria toxin receptor. In Homo sapiens (Human), this protein is Proheparin-binding EGF-like growth factor (HBEGF).